Reading from the N-terminus, the 345-residue chain is 3-dehydroquinate synthase (345 aa).

Residues Asp62–Lys67, Gly96–Asp100, Thr120–Thr121, Lys133, Lys142, and Phe160–Thr163 contribute to the NAD(+) site. The Zn(2+) site is built by Glu175, His233, and His250.

It belongs to the sugar phosphate cyclases superfamily. Dehydroquinate synthase family. It depends on Co(2+) as a cofactor. Requires Zn(2+) as cofactor. The cofactor is NAD(+).

The protein resides in the cytoplasm. It catalyses the reaction 7-phospho-2-dehydro-3-deoxy-D-arabino-heptonate = 3-dehydroquinate + phosphate. It functions in the pathway metabolic intermediate biosynthesis; chorismate biosynthesis; chorismate from D-erythrose 4-phosphate and phosphoenolpyruvate: step 2/7. Catalyzes the conversion of 3-deoxy-D-arabino-heptulosonate 7-phosphate (DAHP) to dehydroquinate (DHQ). In Campylobacter concisus (strain 13826), this protein is 3-dehydroquinate synthase.